The sequence spans 196 residues: Proteasome subunit beta 1 (196 aa).

Residues 1–6 (MEKKTG) constitute a propeptide, removed in mature form; by autocatalysis. Residue Thr7 is the Nucleophile of the active site.

This sequence belongs to the peptidase T1B family. As to quaternary structure, the 20S proteasome core is composed of 14 alpha and 14 beta subunits that assemble into four stacked heptameric rings, resulting in a barrel-shaped structure. The two inner rings, each composed of seven catalytic beta subunits, are sandwiched by two outer rings, each composed of seven alpha subunits. The catalytic chamber with the active sites is on the inside of the barrel. Has a gated structure, the ends of the cylinder being occluded by the N-termini of the alpha-subunits. Is capped at one or both ends by the proteasome regulatory ATPase, PAN.

The protein localises to the cytoplasm. It catalyses the reaction Cleavage of peptide bonds with very broad specificity.. With respect to regulation, the formation of the proteasomal ATPase PAN-20S proteasome complex, via the docking of the C-termini of PAN into the intersubunit pockets in the alpha-rings, triggers opening of the gate for substrate entry. Interconversion between the open-gate and close-gate conformations leads to a dynamic regulation of the 20S proteasome proteolysis activity. Component of the proteasome core, a large protease complex with broad specificity involved in protein degradation. The chain is Proteasome subunit beta 1 from Pyrococcus furiosus (strain ATCC 43587 / DSM 3638 / JCM 8422 / Vc1).